A 370-amino-acid chain; its full sequence is Phospho-N-acetylmuramoyl-pentapeptide-transferase (370 aa).

The next 10 membrane-spanning stretches (helical) occupy residues 31-51 (LTSMFVTFWLGHKVIDFLYGL), 73-93 (TMGGLLIIGSLLLSVLLWGNL), 98-118 (IIVLSVFALCFSALGFADDYM), 135-155 (LLSILISLVFCILFFYYTGVI), 177-197 (GPVLALGVFAIPFSILVIIGS), 209-229 (GLATGTVAISVVTLGIIAYVS), 251-271 (VFLSALAGALFGFLWFNAHPA), 273-293 (VFMGDTGSLFLGATLGMIVIL), 298-318 (ILLLILGAIFVSEALSVILQV), and 347-367 (KIVIRFWIIAVILAIISLSTL).

It belongs to the glycosyltransferase 4 family. MraY subfamily. Requires Mg(2+) as cofactor.

The protein resides in the cell inner membrane. The enzyme catalyses UDP-N-acetyl-alpha-D-muramoyl-L-alanyl-gamma-D-glutamyl-meso-2,6-diaminopimeloyl-D-alanyl-D-alanine + di-trans,octa-cis-undecaprenyl phosphate = di-trans,octa-cis-undecaprenyl diphospho-N-acetyl-alpha-D-muramoyl-L-alanyl-D-glutamyl-meso-2,6-diaminopimeloyl-D-alanyl-D-alanine + UMP. Its pathway is cell wall biogenesis; peptidoglycan biosynthesis. In terms of biological role, catalyzes the initial step of the lipid cycle reactions in the biosynthesis of the cell wall peptidoglycan: transfers peptidoglycan precursor phospho-MurNAc-pentapeptide from UDP-MurNAc-pentapeptide onto the lipid carrier undecaprenyl phosphate, yielding undecaprenyl-pyrophosphoryl-MurNAc-pentapeptide, known as lipid I. The sequence is that of Phospho-N-acetylmuramoyl-pentapeptide-transferase from Leptospira borgpetersenii serovar Hardjo-bovis (strain JB197).